We begin with the raw amino-acid sequence, 157 residues long: Ribonuclease H (157 aa).

An RNase H type-1 domain is found at asparagine 3–threonine 144. Positions 12, 50, 72, and 136 each coordinate Mg(2+).

It belongs to the RNase H family. Monomer. Mg(2+) serves as cofactor.

The protein resides in the cytoplasm. The catalysed reaction is Endonucleolytic cleavage to 5'-phosphomonoester.. Functionally, endonuclease that specifically degrades the RNA of RNA-DNA hybrids. This chain is Ribonuclease H, found in Idiomarina loihiensis (strain ATCC BAA-735 / DSM 15497 / L2-TR).